The sequence spans 121 residues: Small ribosomal subunit protein uS13 (121 aa).

A disordered region spans residues 91–121; it reads HRRGLPVRGQNTKNNARTRKGPSKTVAGKKK. The span at 106–121 shows a compositional bias: basic residues; that stretch reads ARTRKGPSKTVAGKKK.

This sequence belongs to the universal ribosomal protein uS13 family. As to quaternary structure, part of the 30S ribosomal subunit. Forms a loose heterodimer with protein S19. Forms two bridges to the 50S subunit in the 70S ribosome.

Located at the top of the head of the 30S subunit, it contacts several helices of the 16S rRNA. In the 70S ribosome it contacts the 23S rRNA (bridge B1a) and protein L5 of the 50S subunit (bridge B1b), connecting the 2 subunits; these bridges are implicated in subunit movement. Contacts the tRNAs in the A and P-sites. The chain is Small ribosomal subunit protein uS13 from Listeria monocytogenes serotype 4b (strain CLIP80459).